Here is an 806-residue protein sequence, read N- to C-terminus: Ribonucleoside-diphosphate reductase large subunit-like protein (806 aa).

The protein belongs to the ribonucleoside diphosphate reductase large chain family.

It is found in the virion. It localises to the host cytoplasm. Does not possess a ribonucleotide reductase activity. Betaherpesviruses probably use another strategy to expand the dNTP pool in a quiescent host cell. This Human herpesvirus 7 (strain JI) (HHV-7) protein is Ribonucleoside-diphosphate reductase large subunit-like protein.